The chain runs to 351 residues: MQRALPGARQHLGAILASASVVVKALCAAVLFLYLLSFAVDTGCLAVTPGYLFPPNFWIWTLATHGLMEQHVWDVAISLTTVVVAGRLLEPLWGALELLIFFSVVNVSVGLLGAFAYLLTYMASFNLVYLFTVRIHGALGFLGGVLVALKQTMGDCVVLRVPQVRVSVMPMLLLALLLLLRLATLLQSPALASYGFGLLSSWVYLRFYQRHSRGRGDMADHFAFATFFPEILQPVVGLLANLVHSLLVKVKICQKTVKRYDVGAPSSITISLPGTDPQDAERRRQLALKALNERLKRVEDQSIWPSMDDDEEESGAKVDSPLPSDKAPTPPGKGAAPESSLITFEAAPPTL.

Topologically, residues 1–19 are cytoplasmic; the sequence is MQRALPGARQHLGAILASA. The segment at 1–205 is mediates homooligomerization; sequence MQRALPGARQ…FGLLSSWVYL (205 aa). Residues 20–40 traverse the membrane as a helical segment; the sequence is SVVVKALCAAVLFLYLLSFAV. Residues 41–97 lie on the Lumenal side of the membrane; it reads DTGCLAVTPGYLFPPNFWIWTLATHGLMEQHVWDVAISLTTVVVAGRLLEPLWGALE. The helical transmembrane segment at 98–118 threads the bilayer; that stretch reads LLIFFSVVNVSVGLLGAFAYL. At 119-126 the chain is on the cytoplasmic side; that stretch reads LTYMASFN. A helical membrane pass occupies residues 127 to 147; sequence LVYLFTVRIHGALGFLGGVLV. The Lumenal portion of the chain corresponds to 148-165; sequence ALKQTMGDCVVLRVPQVR. A helical transmembrane segment spans residues 166–186; it reads VSVMPMLLLALLLLLRLATLL. Topologically, residues 187-351 are cytoplasmic; sequence QSPALASYGF…ITFEAAPPTL (165 aa). The tract at residues 206–229 is mediates localization to the Golgi; it reads RFYQRHSRGRGDMADHFAFATFFP. The disordered stretch occupies residues 301 to 351; that stretch reads QSIWPSMDDDEEESGAKVDSPLPSDKAPTPPGKGAAPESSLITFEAAPPTL. Position 329 is a phosphothreonine (T329).

The protein belongs to the TMEM115 family. As to quaternary structure, homooligomer. Interacts with COPB1. May interact with LMAN1. Interacts with the COG complex; probably through COG3. As to expression, expressed strongly in kidney and skeletal muscle, followed by liver, placenta, pancreas, and lung, with low amounts in heart and only traces in brain. Widely expressed with ubiquitous expression in epithelial tissues (at protein level).

It is found in the golgi apparatus. The protein resides in the golgi stack membrane. May play a role in retrograde transport of proteins from the Golgi to the endoplasmic reticulum. May indirectly play a role in protein glycosylation in the Golgi. In Homo sapiens (Human), this protein is Transmembrane protein 115.